The sequence spans 813 residues: Striatin-interacting protein 1 homolog (813 aa).

Disordered stretches follow at residues 1–41 and 307–379; these read MDGV…SEAP and RAAS…RDEV. The span at 9–18 shows a compositional bias: polar residues; sequence NNKQKQNQML. Basic and acidic residues predominate over residues 22–35; sequence MRGEFTRNQRKDSE. The span at 307 to 316 shows a compositional bias: low complexity; the sequence is RAASPPASAS. Ser310 is subject to Phosphoserine. A compositionally biased stretch (basic and acidic residues) spans 331–352; it reads KALIKQDNLDTFNEKDPYKADD. The segment covering 353–367 has biased composition (acidic residues); the sequence is SHEDEEENDDNDNSL.

This sequence belongs to the STRIP family. In terms of assembly, part of the core of STRIPAK complexes composed of PP2A catalytic and scaffolding subunits, the striatins (PP2A regulatory subunits), the striatin-associated proteins MOB4, STRIP1 and STRIP2, PDCD10 and members of the STE20 kinases, such as STK24 and STK26.

The protein localises to the cytoplasm. Functionally, plays a role in the regulation of cell morphology and cytoskeletal organization. Required in the cortical actin filament dynamics and cell shape. Part of the striatin-interacting phosphatase and kinase (STRIPAK) complexes. STRIPAK complexes have critical roles in protein (de)phosphorylation and are regulators of multiple signaling pathways including Hippo, MAPK, nuclear receptor and cytoskeleton remodeling. Different types of STRIPAK complexes are involved in a variety of biological processes such as cell growth, differentiation, apoptosis, metabolism and immune regulation. The protein is Striatin-interacting protein 1 homolog (strip1) of Danio rerio (Zebrafish).